The sequence spans 414 residues: UDP-N-acetylmuramoylalanine--D-glutamate ligase (414 aa).

Residue 104–110 (GSNGKST) coordinates ATP.

This sequence belongs to the MurCDEF family.

It is found in the cytoplasm. It catalyses the reaction UDP-N-acetyl-alpha-D-muramoyl-L-alanine + D-glutamate + ATP = UDP-N-acetyl-alpha-D-muramoyl-L-alanyl-D-glutamate + ADP + phosphate + H(+). Its pathway is cell wall biogenesis; peptidoglycan biosynthesis. Its function is as follows. Cell wall formation. Catalyzes the addition of glutamate to the nucleotide precursor UDP-N-acetylmuramoyl-L-alanine (UMA). This Francisella philomiragia subsp. philomiragia (strain ATCC 25017 / CCUG 19701 / FSC 153 / O#319-036) protein is UDP-N-acetylmuramoylalanine--D-glutamate ligase.